Reading from the N-terminus, the 548-residue chain is Cleavage and polyadenylation specificity factor subunit 6 (548 aa).

The 81-residue stretch at 81 to 161 (IALYIGNLTW…QKPIVTPCNK (81 aa)) folds into the RRM domain. Positions 169-180 (MQSRKTATQAGQ) are enriched in polar residues. Disordered stretches follow at residues 169 to 401 (MQSR…MDVV) and 473 to 548 (LHGI…YRHR). 3 stretches are compositionally biased toward pro residues: residues 221 to 279 (PAGP…PPVM), 294 to 362 (PPGP…PPPG), and 373 to 384 (GPPPSDPYGRPP). 2 stretches are compositionally biased toward basic and acidic residues: residues 385–400 (PYER…DMDV) and 490–500 (RSRERDHSRSR). Basic residues predominate over residues 501–511 (EKSRRHKSRSR). Residues 512 to 548 (DRHDDYYRERSRERERHRDRERDRDRERDREREYRHR) show a composition bias toward basic and acidic residues.

It belongs to the RRM CPSF6/7 family. In terms of assembly, component of the cleavage factor Im (CFIm) complex.

It is found in the nucleus. The protein localises to the nucleoplasm. The protein resides in the nucleus speckle. It localises to the cytoplasm. Its function is as follows. Component of the cleavage factor Im (CFIm) complex that functions as an activator of the pre-mRNA 3'-end cleavage and polyadenylation processing required for the maturation of pre-mRNA into functional mRNAs. CFIm contributes to the recruitment of multiprotein complexes on specific sequences on the pre-mRNA 3'-end, so called cleavage and polyadenylation signals (pA signals). Most pre-mRNAs contain multiple pA signals, resulting in alternative cleavage and polyadenylation (APA) producing mRNAs with variable 3'-end formation. The CFIm complex acts as a key regulator of cleavage and polyadenylation site choice during APA through its binding to 5'-UGUA-3' elements localized in the 3'-untranslated region (UTR) for a huge number of pre-mRNAs. Plays a role in mRNA export. This chain is Cleavage and polyadenylation specificity factor subunit 6, found in Xenopus laevis (African clawed frog).